The following is a 274-amino-acid chain: Probable endonuclease LCL3 (274 aa).

Residues 15 to 32 (AVLSIILTGSTLTLIYTY) form a helical membrane-spanning segment. Residues 53–261 (HWLYGKVTSV…RSRKKGLWIQ (209 aa)) form the TNase-like domain. Arginine 151 is a catalytic residue. Residue aspartate 156 coordinates Ca(2+). Active-site residues include glutamate 159 and arginine 199.

It belongs to the LCL3 family.

The protein localises to the mitochondrion. It localises to the membrane. The polypeptide is Probable endonuclease LCL3 (LCL3) (Saccharomyces cerevisiae (strain Lalvin EC1118 / Prise de mousse) (Baker's yeast)).